The sequence spans 401 residues: Chalcone synthase 1 (401 aa).

The active site involves cysteine 168.

The protein belongs to the thiolase-like superfamily. Chalcone/stilbene synthases family.

It catalyses the reaction (E)-4-coumaroyl-CoA + 3 malonyl-CoA + 3 H(+) = 2',4,4',6'-tetrahydroxychalcone + 3 CO2 + 4 CoA. It functions in the pathway secondary metabolite biosynthesis; flavonoid biosynthesis. Functionally, the primary product of this enzyme is 4,2',4',6'-tetrahydroxychalcone (also termed naringenin-chalcone or chalcone) which can under specific conditions spontaneously isomerize into naringenin. The chain is Chalcone synthase 1 (CHS1) from Sorghum bicolor (Sorghum).